The sequence spans 341 residues: Thymidine kinase (341 aa).

19–26 (GAYGIGKT) contacts ATP. Catalysis depends on Glu-48, which acts as the Proton acceptor. Substrate-binding residues include Tyr-66 and Gln-90. Arg-183 contributes to the ATP binding site. Arg-189 contributes to the substrate binding site.

The protein belongs to the herpesviridae thymidine kinase family. In terms of assembly, homodimer.

It carries out the reaction thymidine + ATP = dTMP + ADP + H(+). Its function is as follows. Catalyzes the transfer of the gamma-phospho group of ATP to thymidine to generate dTMP in the salvage pathway of pyrimidine synthesis. The dTMP serves as a substrate for DNA polymerase during viral DNA replication. Allows the virus to be reactivated and to grow in non-proliferative cells lacking a high concentration of phosphorylated nucleic acid precursors. The sequence is that of Thymidine kinase from Varicella-zoster virus (strain Dumas) (HHV-3).